The following is a 1347-amino-acid chain: Ubinuclein-2 (1347 aa).

Residues 1 to 134 (MAEPRRVAFI…ETVRLELVLK (134 aa)) form a disordered region. Position 13 is a phosphoserine (Ser-13). Basic and acidic residues-rich tracts occupy residues 16–37 (RRRE…EPPR) and 67–79 (SREK…EVSR). The segment covering 93–110 (PEPPPPFPPLPLQPPPPR) has biased composition (pro residues). The segment covering 122–134 (PPRETVRLELVLK) has biased composition (basic and acidic residues). Thr-243 is modified (phosphothreonine). A Phosphoserine modification is found at Ser-250. The segment at 250-301 (SDTEEDDITDNQKHKPPKVPKIKEDDIEMKKRKRKEEGEKEKKPRKKVPKQL) is disordered. A Phosphothreonine modification is found at Thr-252. Residue Lys-272 forms a Glycyl lysine isopeptide (Lys-Gly) (interchain with G-Cter in SUMO2) linkage. A phosphoserine mark is found at Ser-311, Ser-416, Ser-419, Ser-422, and Ser-584. 6 disordered regions span residues 573–597 (LQTD…KRVI), 707–740 (ECSP…AAAS), 815–849 (LATP…DLAH), 880–913 (GLQR…HALG), 981–1006 (RLPL…TVPS), and 1035–1218 (ASPK…SSVV). Over residues 574–584 (QTDEEREKNGS) the composition is skewed to basic and acidic residues. Positions 721–740 (VASVSGPPTSSSTAAIAAAS) are enriched in low complexity. The segment covering 823–832 (STQTTHSSSL) has biased composition (polar residues). Residues 880 to 911 (GLQRSSQIHTSSSSQTHVSSSSQAQIAASSHA) are compositionally biased toward low complexity. Polar residues predominate over residues 985–996 (STPSPGNGSQGS). The segment covering 1035-1045 (ASPKLAASPKP) has biased composition (low complexity). Residues 1046 to 1060 (ATSPKPLPSPKPSAS) show a composition bias toward pro residues. Composition is skewed to low complexity over residues 1061–1070 (PKPSLSAKPS) and 1077–1095 (SKSN…SSPN). Residue Lys-1068 is modified to N6-acetyllysine. Composition is skewed to polar residues over residues 1101–1164 (GSHS…NSLS) and 1174–1185 (RGSNLNSSGANR). A Phosphoserine modification is found at Ser-1123. Residue Lys-1148 is modified to N6-acetyllysine.

Belongs to the ubinuclein family. As to expression, expressed in several cell lines tested, including primary and transformed cell lines.

In Homo sapiens (Human), this protein is Ubinuclein-2 (UBN2).